We begin with the raw amino-acid sequence, 208 residues long: GTP cyclohydrolase 1 (208 aa).

The Zn(2+) site is built by Cys-89, His-92, and Cys-163.

This sequence belongs to the GTP cyclohydrolase I family. As to quaternary structure, homomer.

The enzyme catalyses GTP + H2O = 7,8-dihydroneopterin 3'-triphosphate + formate + H(+). Its pathway is cofactor biosynthesis; 7,8-dihydroneopterin triphosphate biosynthesis; 7,8-dihydroneopterin triphosphate from GTP: step 1/1. The sequence is that of GTP cyclohydrolase 1 from Saccharolobus islandicus (strain L.S.2.15 / Lassen #1) (Sulfolobus islandicus).